A 239-amino-acid chain; its full sequence is Ribosomal RNA large subunit methyltransferase E (239 aa).

Residues 1–20 (MTKAPIAGNRTGRKLGQRVK) form a disordered region. Over residues 11–20 (TGRKLGQRVK) the composition is skewed to basic residues. Positions 81, 83, 104, 120, and 144 each coordinate S-adenosyl-L-methionine. The active-site Proton acceptor is the K184.

This sequence belongs to the class I-like SAM-binding methyltransferase superfamily. RNA methyltransferase RlmE family.

The protein localises to the cytoplasm. The enzyme catalyses uridine(2552) in 23S rRNA + S-adenosyl-L-methionine = 2'-O-methyluridine(2552) in 23S rRNA + S-adenosyl-L-homocysteine + H(+). Its function is as follows. Specifically methylates the uridine in position 2552 of 23S rRNA at the 2'-O position of the ribose in the fully assembled 50S ribosomal subunit. The sequence is that of Ribosomal RNA large subunit methyltransferase E from Rhizobium leguminosarum bv. trifolii (strain WSM2304).